The primary structure comprises 758 residues: 5-methyltetrahydropteroyltriglutamate--homocysteine methyltransferase (758 aa).

Residues 17–20 and lysine 117 each bind 5-methyltetrahydropteroyltri-L-glutamate; that span reads RELK. L-homocysteine-binding positions include 434 to 436 and glutamate 487; that span reads IGS. Residues 434–436 and glutamate 487 contribute to the L-methionine site; that span reads IGS. 5-methyltetrahydropteroyltri-L-glutamate-binding positions include 518 to 519 and tryptophan 564; that span reads RC. Aspartate 602 provides a ligand contact to L-homocysteine. Residue aspartate 602 participates in L-methionine binding. Glutamate 608 contacts 5-methyltetrahydropteroyltri-L-glutamate. Zn(2+) is bound by residues histidine 644, cysteine 646, and glutamate 668. Residue histidine 697 is the Proton donor of the active site. Zn(2+) is bound at residue cysteine 729.

This sequence belongs to the vitamin-B12 independent methionine synthase family. Zn(2+) serves as cofactor.

The catalysed reaction is 5-methyltetrahydropteroyltri-L-glutamate + L-homocysteine = tetrahydropteroyltri-L-glutamate + L-methionine. It participates in amino-acid biosynthesis; L-methionine biosynthesis via de novo pathway; L-methionine from L-homocysteine (MetE route): step 1/1. Its function is as follows. Catalyzes the transfer of a methyl group from 5-methyltetrahydrofolate to homocysteine resulting in methionine formation. This chain is 5-methyltetrahydropteroyltriglutamate--homocysteine methyltransferase, found in Sodalis glossinidius (strain morsitans).